The following is a 1368-amino-acid chain: DNA-directed RNA polymerase subunit beta (1368 aa).

This sequence belongs to the RNA polymerase beta chain family. As to quaternary structure, the RNAP catalytic core consists of 2 alpha, 1 beta, 1 beta' and 1 omega subunit. When a sigma factor is associated with the core the holoenzyme is formed, which can initiate transcription.

The catalysed reaction is RNA(n) + a ribonucleoside 5'-triphosphate = RNA(n+1) + diphosphate. In terms of biological role, DNA-dependent RNA polymerase catalyzes the transcription of DNA into RNA using the four ribonucleoside triphosphates as substrates. This is DNA-directed RNA polymerase subunit beta from Paraburkholderia phymatum (strain DSM 17167 / CIP 108236 / LMG 21445 / STM815) (Burkholderia phymatum).